We begin with the raw amino-acid sequence, 253 residues long: Probable transcriptional regulatory protein RAF_ORF0717 (253 aa).

The segment at 1–21 (MAGHSKFKNIQHRKGAQDKKR) is disordered.

Belongs to the TACO1 family.

It localises to the cytoplasm. The sequence is that of Probable transcriptional regulatory protein RAF_ORF0717 from Rickettsia africae (strain ESF-5).